A 394-amino-acid chain; its full sequence is Venom metalloproteinase antarease TserMP_A (394 aa).

The signal sequence occupies residues 1–16 (MISYLASIFLLATVSA). Residues 17–157 (VPSGRVEVVF…NAENVSRMAR (141 aa)) constitute a propeptide that is removed on maturation. The Peptidase M12B domain occupies 162 to 391 (IVVEYYIVTD…PTASCIFQQC (230 aa)). Cys-295 and Cys-386 are disulfide-bonded. His-319 lines the Zn(2+) pocket. Glu-320 is a catalytic residue. Residues His-323 and His-329 each contribute to the Zn(2+) site.

Zn(2+) serves as cofactor. Contains 4 disulfide bonds. Expressed by the venom gland.

The protein resides in the secreted. Inhibited by EDTA. Functionally, acts as a metalloprotease. Penetrates intact tissue and specifically cleaves the vesicle-associated membrane protein 2 (VAMP2) (part of the SNARE complex) involved in pancreatic secretion, thus disrupting the normal vesicular traffic. The sequence is that of Venom metalloproteinase antarease TserMP_A from Tityus serrulatus (Brazilian scorpion).